Here is a 987-residue protein sequence, read N- to C-terminus: KAT8 regulatory NSL complex subunit 1-like protein (987 aa).

Lysine 134 is covalently cross-linked (Glycyl lysine isopeptide (Lys-Gly) (interchain with G-Cter in SUMO2)). Serine 462 carries the post-translational modification Phosphoserine. The interval 708–738 (RKKRHLSETALGERTKLEESDFQHTESGSHS) is disordered. Over residues 718-731 (LGERTKLEESDFQH) the composition is skewed to basic and acidic residues. Positions 794–915 (EILTPSWRMV…QSQETKSLWW (122 aa)) constitute a PEHE domain. The residue at position 859 (lysine 859) is an N6-acetyllysine. Residues 949-972 (GEIFGTSVPENGHHPKKQSDGMEE) are disordered. Residues 959–972 (NGHHPKKQSDGMEE) show a composition bias toward basic and acidic residues.

In terms of processing, acetylated on lysine residues by KAT8 upon ionizing radiation-induced DNA damage; deacetylated by HDAC3.

The polypeptide is KAT8 regulatory NSL complex subunit 1-like protein (KANSL1L) (Homo sapiens (Human)).